Consider the following 399-residue polypeptide: Tyrosine--tRNA ligase 2 (399 aa).

The 'HIGH' region motif lies at Pro43–His52. Residues Lys227–Ser231 carry the 'KMSKS' region motif. Lys230 lines the ATP pocket. Residues Ile338 to Gly398 enclose the S4 RNA-binding domain.

This sequence belongs to the class-I aminoacyl-tRNA synthetase family. TyrS type 2 subfamily. Homodimer.

The protein localises to the cytoplasm. The enzyme catalyses tRNA(Tyr) + L-tyrosine + ATP = L-tyrosyl-tRNA(Tyr) + AMP + diphosphate + H(+). Functionally, catalyzes the attachment of tyrosine to tRNA(Tyr) in a two-step reaction: tyrosine is first activated by ATP to form Tyr-AMP and then transferred to the acceptor end of tRNA(Tyr). This is Tyrosine--tRNA ligase 2 from Photorhabdus laumondii subsp. laumondii (strain DSM 15139 / CIP 105565 / TT01) (Photorhabdus luminescens subsp. laumondii).